Here is a 443-residue protein sequence, read N- to C-terminus: tRNA-2-methylthio-N(6)-dimethylallyladenosine synthase (443 aa).

The 118-residue stretch at 3 to 120 (SKLYIKTFGC…LPELIDARRR (118 aa)) folds into the MTTase N-terminal domain. [4Fe-4S] cluster is bound by residues cysteine 12, cysteine 49, cysteine 83, cysteine 157, cysteine 161, and cysteine 164. Positions 143–377 (RTTGATAFVS…KIQRNAQMIS (235 aa)) constitute a Radical SAM core domain. Residues 378 to 441 (QSMVDTIQRV…SHTLRGEISD (64 aa)) form the TRAM domain.

Belongs to the methylthiotransferase family. MiaB subfamily. As to quaternary structure, monomer. The cofactor is [4Fe-4S] cluster.

The protein resides in the cytoplasm. The catalysed reaction is N(6)-dimethylallyladenosine(37) in tRNA + (sulfur carrier)-SH + AH2 + 2 S-adenosyl-L-methionine = 2-methylsulfanyl-N(6)-dimethylallyladenosine(37) in tRNA + (sulfur carrier)-H + 5'-deoxyadenosine + L-methionine + A + S-adenosyl-L-homocysteine + 2 H(+). Functionally, catalyzes the methylthiolation of N6-(dimethylallyl)adenosine (i(6)A), leading to the formation of 2-methylthio-N6-(dimethylallyl)adenosine (ms(2)i(6)A) at position 37 in tRNAs that read codons beginning with uridine. The polypeptide is tRNA-2-methylthio-N(6)-dimethylallyladenosine synthase (Nitrosomonas eutropha (strain DSM 101675 / C91 / Nm57)).